The chain runs to 195 residues: dTTP/UTP pyrophosphatase (195 aa).

The active-site Proton acceptor is Asp-70.

Belongs to the Maf family. YhdE subfamily. The cofactor is a divalent metal cation.

It localises to the cytoplasm. The enzyme catalyses dTTP + H2O = dTMP + diphosphate + H(+). It carries out the reaction UTP + H2O = UMP + diphosphate + H(+). Its function is as follows. Nucleoside triphosphate pyrophosphatase that hydrolyzes dTTP and UTP. May have a dual role in cell division arrest and in preventing the incorporation of modified nucleotides into cellular nucleic acids. The polypeptide is dTTP/UTP pyrophosphatase (Methanococcoides burtonii (strain DSM 6242 / NBRC 107633 / OCM 468 / ACE-M)).